Reading from the N-terminus, the 153-residue chain is MSKLNYKVETDPNKTARAMGRSLRISRKHTIEICREISGMKLDKAIAYLNRVIELKQVVPFKRHGKDVPHKKGKYGWTAGRFPQKASTQILSVLENAKKNAEYKGMNTEKLRIKHISSNKGFTIKRHMPRAFGRASPKNQETVHVQVILEEFY.

The protein belongs to the universal ribosomal protein uL22 family. In terms of assembly, part of the 50S ribosomal subunit.

Functionally, this protein binds specifically to 23S rRNA. It makes multiple contacts with different domains of the 23S rRNA in the assembled 50S subunit and ribosome. Its function is as follows. The globular domain of the protein is located near the polypeptide exit tunnel on the outside of the subunit, while an extended beta-hairpin is found that lines the wall of the exit tunnel in the center of the 70S ribosome. In Methanococcus aeolicus (strain ATCC BAA-1280 / DSM 17508 / OCM 812 / Nankai-3), this protein is Large ribosomal subunit protein uL22.